We begin with the raw amino-acid sequence, 461 residues long: Argininosuccinate lyase (461 aa).

It belongs to the lyase 1 family. Argininosuccinate lyase subfamily.

The protein localises to the cytoplasm. It carries out the reaction 2-(N(omega)-L-arginino)succinate = fumarate + L-arginine. The protein operates within amino-acid biosynthesis; L-arginine biosynthesis; L-arginine from L-ornithine and carbamoyl phosphate: step 3/3. This chain is Argininosuccinate lyase, found in Trichormus variabilis (strain ATCC 29413 / PCC 7937) (Anabaena variabilis).